We begin with the raw amino-acid sequence, 418 residues long: Glutamyl-tRNA reductase (418 aa).

Residues 49 to 52 (TCNR), S109, 114 to 116 (EPQ), and Q120 each bind substrate. The Nucleophile role is filled by C50. An NADP(+)-binding site is contributed by 189–194 (GAGETI).

Belongs to the glutamyl-tRNA reductase family. In terms of assembly, homodimer.

The enzyme catalyses (S)-4-amino-5-oxopentanoate + tRNA(Glu) + NADP(+) = L-glutamyl-tRNA(Glu) + NADPH + H(+). Its pathway is porphyrin-containing compound metabolism; protoporphyrin-IX biosynthesis; 5-aminolevulinate from L-glutamyl-tRNA(Glu): step 1/2. Its function is as follows. Catalyzes the NADPH-dependent reduction of glutamyl-tRNA(Glu) to glutamate 1-semialdehyde (GSA). The polypeptide is Glutamyl-tRNA reductase (Shigella flexneri).